The primary structure comprises 279 residues: Inorganic pyrophosphatase (279 aa).

R100 contacts diphosphate. Mg(2+) contacts are provided by D132, D137, and D169.

Belongs to the PPase family. Requires Mg(2+) as cofactor.

The enzyme catalyses diphosphate + H2O = 2 phosphate + H(+). The polypeptide is Inorganic pyrophosphatase (ppa1) (Dictyostelium discoideum (Social amoeba)).